The primary structure comprises 1080 residues: Isoleucine--tRNA ligase (1080 aa).

The short motif at 48-58 (PYASGSIHLGT) is the 'HIGH' region element. The 'KMSKS' region motif lies at 628–632 (KMSKS). Lysine 631 serves as a coordination point for ATP.

This sequence belongs to the class-I aminoacyl-tRNA synthetase family. IleS type 2 subfamily. In terms of assembly, monomer. Zn(2+) serves as cofactor.

It is found in the cytoplasm. The enzyme catalyses tRNA(Ile) + L-isoleucine + ATP = L-isoleucyl-tRNA(Ile) + AMP + diphosphate. Catalyzes the attachment of isoleucine to tRNA(Ile). As IleRS can inadvertently accommodate and process structurally similar amino acids such as valine, to avoid such errors it has two additional distinct tRNA(Ile)-dependent editing activities. One activity is designated as 'pretransfer' editing and involves the hydrolysis of activated Val-AMP. The other activity is designated 'posttransfer' editing and involves deacylation of mischarged Val-tRNA(Ile). This is Isoleucine--tRNA ligase from Methanopyrus kandleri (strain AV19 / DSM 6324 / JCM 9639 / NBRC 100938).